We begin with the raw amino-acid sequence, 117 residues long: MAHTVFVPTGRFPQGIYKKDLSFTLNFRKKNITLDDNFDICVFLVNEEDDEFQVTLTSNEISLVKVIDDENGDKTIEEFIEKIISEEMLHLKNKTQFKKGLYHYNNGDWEQTENLSD.

This is an uncharacterized protein from Acheta domesticus (House cricket).